The primary structure comprises 396 residues: Ribosomal RNA large subunit methyltransferase I (396 aa).

The PUA domain occupies 2–81 (SVRLVLAKGR…ESIDIAFFSR (80 aa)).

Belongs to the methyltransferase superfamily. RlmI family.

The protein resides in the cytoplasm. It catalyses the reaction cytidine(1962) in 23S rRNA + S-adenosyl-L-methionine = 5-methylcytidine(1962) in 23S rRNA + S-adenosyl-L-homocysteine + H(+). Specifically methylates the cytosine at position 1962 (m5C1962) of 23S rRNA. The sequence is that of Ribosomal RNA large subunit methyltransferase I from Escherichia coli (strain K12 / MC4100 / BW2952).